A 287-amino-acid chain; its full sequence is 2' cyclic ADP-D-ribose synthase BtTIR (287 aa).

One can recognise a TIR domain in the interval 155-287 (KQYDFFISHA…DDIVENLKNL (133 aa)). The active site involves Glu-230.

In terms of assembly, homodimer.

The enzyme catalyses NAD(+) = 2'cADPR + nicotinamide + H(+). Its function is as follows. NAD(+) hydrolase (NADase) that cleaves NAD(+) into nicotinamide and 2' cyclic ADP-D-ribose (2'cADPR). In Bacteroides thetaiotaomicron, this protein is 2' cyclic ADP-D-ribose synthase BtTIR.